Consider the following 174-residue polypeptide: Gamma-crystallin F (174 aa).

Beta/gamma crystallin 'Greek key' domains follow at residues 2–40 (GKIT…RVDS) and 41–83 (GCWM…HLIP). The interval 84–87 (HSSS) is connecting peptide. 2 Beta/gamma crystallin 'Greek key' domains span residues 88–128 (HRIR…HVIE) and 129–171 (GYWV…RRIM).

Belongs to the beta/gamma-crystallin family.

Functionally, crystallins are the dominant structural components of the vertebrate eye lens. The chain is Gamma-crystallin F (Crygf) from Rattus norvegicus (Rat).